The primary structure comprises 271 residues: Probable short-chain type dehydrogenase/reductase VdlC (271 aa).

1 to 25 (MAVITGASSGIGLECVLMLLNQGYK) serves as a coordination point for NAD(+). Ser-129 contacts substrate. The active-site Proton acceptor is the Tyr-142.

This sequence belongs to the short-chain dehydrogenases/reductases (SDR) family.

This chain is Probable short-chain type dehydrogenase/reductase VdlC (vdlC), found in Helicobacter pylori (strain J99 / ATCC 700824) (Campylobacter pylori J99).